A 173-amino-acid polypeptide reads, in one-letter code: Photosystem I assembly protein Ycf3 (173 aa).

TPR repeat units lie at residues 35–68 (AYVY…EESP), 72–105 (SETL…NSNQ), and 120–153 (GRTA…YPGG).

This sequence belongs to the Ycf3 family.

The protein localises to the cellular thylakoid membrane. In terms of biological role, essential for the assembly of the photosystem I (PSI) complex. May act as a chaperone-like factor to guide the assembly of the PSI subunits. The chain is Photosystem I assembly protein Ycf3 from Prochlorococcus marinus (strain MIT 9303).